The primary structure comprises 283 residues: Ribose-phosphate pyrophosphokinase (283 aa).

ATP is bound by residues 34-36 (DGE) and 89-90 (RQ). Positions 120 and 159 each coordinate Mg(2+). The active site involves Lys182. D-ribose 5-phosphate-binding residues include Arg184 and Asp208.

This sequence belongs to the ribose-phosphate pyrophosphokinase family. Class III (archaeal) subfamily. The cofactor is Mg(2+).

It is found in the cytoplasm. It catalyses the reaction D-ribose 5-phosphate + ATP = 5-phospho-alpha-D-ribose 1-diphosphate + AMP + H(+). The protein operates within metabolic intermediate biosynthesis; 5-phospho-alpha-D-ribose 1-diphosphate biosynthesis; 5-phospho-alpha-D-ribose 1-diphosphate from D-ribose 5-phosphate (route I): step 1/1. Its function is as follows. Involved in the biosynthesis of the central metabolite phospho-alpha-D-ribosyl-1-pyrophosphate (PRPP) via the transfer of pyrophosphoryl group from ATP to 1-hydroxyl of ribose-5-phosphate (Rib-5-P). The protein is Ribose-phosphate pyrophosphokinase of Methanosarcina acetivorans (strain ATCC 35395 / DSM 2834 / JCM 12185 / C2A).